Consider the following 30-residue polypeptide: Cycloviolacin-H4 (30 aa).

A cross-link (cyclopeptide (Gly-Asn)) is located at residues 1-30 (GIPCAESCVWIPCTVTALLGCSCSNNVCYN). Intrachain disulfides connect Cys-4–Cys-21, Cys-8–Cys-23, and Cys-13–Cys-28.

In terms of processing, this is a cyclic peptide.

Its function is as follows. Probably participates in a plant defense mechanism. Has potent hemolytic activity. The polypeptide is Cycloviolacin-H4 (Viola hederacea (Australian violet)).